Here is a 317-residue protein sequence, read N- to C-terminus: MPVNSTAVSLASVTYISVEILIGLCAIVGNVLVIWVVKLNPSLQTTTFYFIVSLALADIAVGVLVMPLAIVISLGVTIHFYSCLLMTCLLMIFTHASIMSLLAIAVDRYLRVKLTVRYRRVTTQRRIWLALGLCWLVSFLVGLTPMFGWNMKLSSADKNLTFLPCQFRSVMRMDYMVYFSFFTWILIPLVVMCAIYFDIFYVIRNRLSQNFSGSKETGAFYGREFKTAKSLSLVLFLFALSWLPLSIINCIIYFNGEVPQIVLYLGILLSHANSMMNPIVYAYKIKKFKETYLLILKACVICQPSKSMDPSIEQTSE.

Residues 1 to 14 (MPVNSTAVSLASVT) are Extracellular-facing. The N-linked (GlcNAc...) asparagine glycan is linked to asparagine 4. Residues 15 to 37 (YISVEILIGLCAIVGNVLVIWVV) form a helical membrane-spanning segment. Residues 38–48 (KLNPSLQTTTF) are Cytoplasmic-facing. The helical transmembrane segment at 49 to 72 (YFIVSLALADIAVGVLVMPLAIVI) threads the bilayer. The Extracellular segment spans residues 73-84 (SLGVTIHFYSCL). Cysteines 83 and 165 form a disulfide. A helical transmembrane segment spans residues 85-106 (LMTCLLMIFTHASIMSLLAIAV). Topologically, residues 107 to 126 (DRYLRVKLTVRYRRVTTQRR) are cytoplasmic. A helical transmembrane segment spans residues 127–148 (IWLALGLCWLVSFLVGLTPMFG). The Extracellular portion of the chain corresponds to 149–176 (WNMKLSSADKNLTFLPCQFRSVMRMDYM). The chain crosses the membrane as a helical span at residues 177–197 (VYFSFFTWILIPLVVMCAIYF). At 198-230 (DIFYVIRNRLSQNFSGSKETGAFYGREFKTAKS) the chain is on the cytoplasmic side. The helical transmembrane segment at 231–254 (LSLVLFLFALSWLPLSIINCIIYF) threads the bilayer. Residues 255-260 (NGEVPQ) lie on the Extracellular side of the membrane. The chain crosses the membrane as a helical span at residues 261-283 (IVLYLGILLSHANSMMNPIVYAY). Over 284–317 (KIKKFKETYLLILKACVICQPSKSMDPSIEQTSE) the chain is Cytoplasmic. The S-palmitoyl cysteine moiety is linked to residue cysteine 302.

The protein belongs to the G-protein coupled receptor 1 family. Post-translationally, phosphorylation on Thr-315 and Ser-316 may be crucial for rapid desensitization. Phosphorylation on Thr-315 may be necessary for phosphorylation on Ser-316 to occur.

It is found in the cell membrane. Its function is as follows. Receptor for adenosine. The activity of this receptor is mediated by G proteins which inhibits adenylyl cyclase. The sequence is that of Adenosine receptor A3 (ADORA3) from Bos taurus (Bovine).